A 477-amino-acid chain; its full sequence is Cytochrome P450 708A2 (477 aa).

A helical transmembrane segment spans residues phenylalanine 3–leucine 23. Cysteine 426 serves as a coordination point for heme.

It belongs to the cytochrome P450 family. Heme is required as a cofactor. As to expression, expressed primarily in the root epidermis.

The protein localises to the membrane. Hydroxylates thalianol into thalian-diol. This Arabidopsis thaliana (Mouse-ear cress) protein is Cytochrome P450 708A2 (CYP708A2).